A 231-amino-acid polypeptide reads, in one-letter code: Equistatin (231 aa).

The first 32 residues, Met-1–Ala-32, serve as a signal peptide directing secretion. Thyroglobulin type-1 domains are found at residues Leu-34 to Cys-95, Leu-102 to Cys-163, and Leu-167 to Cys-231. 9 disulfide bridges follow: Cys-37–Cys-56, Cys-67–Cys-74, Cys-76–Cys-95, Cys-105–Cys-124, Cys-135–Cys-142, Cys-144–Cys-163, Cys-170–Cys-191, Cys-202–Cys-209, and Cys-211–Cys-231.

This sequence belongs to the protease inhibitor I31 family.

The protein resides in the secreted. In terms of biological role, potent inhibitor of papain-like cysteine proteinases (Ki=0.18-0.57 nM on papain), as well as of the aspartic proteinase cathepsin D (Ki=0.3-05 nM). The polypeptide is Equistatin (Actinia equina (Beadlet anemone)).